The chain runs to 228 residues: Vesicle transport protein SEC20 (228 aa).

The Cytoplasmic portion of the chain corresponds to 1–199 (MAAPQDVHVR…LITKYNRREL (199 aa)). Residues 37–90 (LSELTELNTKVKEKFQQLKQRIQELEQSAREQDKESEKQLLLQEVENHKKQMLS) adopt a coiled-coil conformation. Residues 200–220 (TDKLLIFLALALFLATVLYIV) traverse the membrane as a helical; Anchor for type IV membrane protein segment. Over 221–228 (KKRLFPFL) the chain is Lumenal.

The protein belongs to the SEC20 family. In terms of assembly, component of a SNARE complex consisting of STX18, USE1L, BNIP1/SEC20L and SEC22B. Interacts directly with STX18, RINT1/TIP20L and NAPA. Interacts with ZW10 through RINT1. Interacts with BCL2. Interacts with RNF186. Interacts with RNF185. Interacts with SQSTM1; increased by 'Lys-63'-linked polyubiquitination of BNIP1. In terms of processing, polyubiquitinated. 'Lys-63'-linked polyubiquitination by RNF185 increases the interaction with the autophagy receptor SQSTM1. Undergoes 'Lys-29'- and 'Lys-63'-linked polyubiquitination by RNF186 that may regulate BNIP1 localization to the mitochondrion.

It is found in the endoplasmic reticulum membrane. The protein localises to the mitochondrion membrane. Functionally, as part of a SNARE complex may be involved in endoplasmic reticulum membranes fusion and be required for the maintenance of endoplasmic reticulum organization. Also plays a role in apoptosis. It is for instance required for endoplasmic reticulum stress-induced apoptosis. As a substrate of RNF185 interacting with SQSTM1, might also be involved in mitochondrial autophagy. The sequence is that of Vesicle transport protein SEC20 from Mus musculus (Mouse).